Reading from the N-terminus, the 249-residue chain is MAKVSELDVQLIAATAFHAPQGVDWEVDEGASESEALVEFAGRACYESFDKPNPRTASNQAYLHHILEVGHDALLEHATATLYIRGLSRSASHELVRHRHFSFSQLSQRFVHSEEAEVVLPKFIAEDEQLTRLTLQAADEARFVYEELLDALESKLEEEPNALLRKKQARQAARAVLPNLTESRIVVTGNYRAWRHFIGARATEQADTEMRQLAVTCLKLLREQSPVLFDDFHITTLADGTEMASSPYA.

Residues 7–235 enclose the ThyX domain; the sequence is LDVQLIAATA…PVLFDDFHIT (229 aa). Residues 94–97, 105–109, and R174 contribute to the dUMP site; these read ELVR and QLSQR. Residues 97 to 99 and Q105 contribute to the FAD site; that span reads RHR. The ThyX motif signature appears at 97–107; sequence RHRHFSFSQLS. Residues 190 to 192 and H196 contribute to the FAD site; that span reads NYR. Residue R201 coordinates dUMP. R201 (involved in ionization of N3 of dUMP, leading to its activation) is an active-site residue.

This sequence belongs to the thymidylate synthase ThyX family. In terms of assembly, homotetramer. FAD is required as a cofactor.

The catalysed reaction is dUMP + (6R)-5,10-methylene-5,6,7,8-tetrahydrofolate + NADPH + H(+) = dTMP + (6S)-5,6,7,8-tetrahydrofolate + NADP(+). It participates in pyrimidine metabolism; dTTP biosynthesis. Catalyzes the reductive methylation of 2'-deoxyuridine-5'-monophosphate (dUMP) to 2'-deoxythymidine-5'-monophosphate (dTMP) while utilizing 5,10-methylenetetrahydrofolate (mTHF) as the methyl donor, and NADPH and FADH(2) as the reductant. In Corynebacterium aurimucosum (strain ATCC 700975 / DSM 44827 / CIP 107346 / CN-1) (Corynebacterium nigricans), this protein is Flavin-dependent thymidylate synthase.